Reading from the N-terminus, the 456-residue chain is Glutamate-gated chloride channel (456 aa).

A signal peptide spans 1-22 (MGSGHYFWAILYFASLCSASLA). The Extracellular portion of the chain corresponds to 23–245 (NNAKINFREK…VDLLFKREFS (223 aa)). L-glutamate is bound by residues arginine 71, arginine 90, and serine 154. The cysteines at positions 163 and 177 are disulfide-linked. Serine 183 serves as a coordination point for L-glutamate. Cysteine 222 and cysteine 233 are disulfide-bonded. Residues 246–268 (YYLIQIYIPCCMLVIVSWVSFWL) form a helical membrane-spanning segment. The Cytoplasmic portion of the chain corresponds to 269–273 (DQGAV). Residues 274-295 (PARVSLGVTTLLTMATQTSGIN) form a helical membrane-spanning segment. Over 296-302 (ASLPPVS) the chain is Extracellular. The chain crosses the membrane as a helical span at residues 303–323 (YTKAIDVWTGVCLTFVFGALL). Residues 324–426 (EFALVNYASR…RQCSRSKRID (103 aa)) are Cytoplasmic-facing. Residues 427–450 (VISRITFPLVFALFNLVYWSTYLF) traverse the membrane as a helical segment. The Extracellular segment spans residues 451-456 (REEEDE).

This sequence belongs to the ligand-gated ion channel (TC 1.A.9) family. Glutamate-gated chloride channel (TC 1.A.9.4) subfamily. Pentamer. Homomultimer. As to expression, expressed in the medulla layers (at protein level). Expressed in all major ON pathway medulla neurons (Mi1, Tm3, Mi4, and Mi9) and in OFF pathway neurons (Tm1, Tm2, Tm4, and Tm9).

It localises to the postsynaptic cell membrane. The protein resides in the cell membrane. Its activity is regulated as follows. Glutamate binding triggers a rapidly reversible current, while the anti-helmintic drug ivermectin triggers a permanently open channel configuration. Inhibited by picrotoxin. In terms of biological role, glutamate-gated chloride channel subunit. Together with Gamma-aminobutyric acid receptor Rdl, plays an important role in the visual response by regulating the activity of ON/OFF-selective neurons. The polypeptide is Glutamate-gated chloride channel (GluClalpha) (Drosophila melanogaster (Fruit fly)).